A 223-amino-acid polypeptide reads, in one-letter code: Ribose-5-phosphate isomerase A (223 aa).

Residues 32 to 35, 85 to 88, and 98 to 101 contribute to the substrate site; these read TGST, DGAD, and KGGG. Glutamate 107 (proton acceptor) is an active-site residue. Substrate is bound at residue lysine 125.

It belongs to the ribose 5-phosphate isomerase family. As to quaternary structure, homodimer.

It catalyses the reaction aldehydo-D-ribose 5-phosphate = D-ribulose 5-phosphate. Its pathway is carbohydrate degradation; pentose phosphate pathway; D-ribose 5-phosphate from D-ribulose 5-phosphate (non-oxidative stage): step 1/1. Its function is as follows. Catalyzes the reversible conversion of ribose-5-phosphate to ribulose 5-phosphate. This is Ribose-5-phosphate isomerase A from Stutzerimonas stutzeri (strain A1501) (Pseudomonas stutzeri).